A 247-amino-acid polypeptide reads, in one-letter code: Putative trypsin-6 (247 aa).

Residues 1–15 form the signal peptide; it reads MNPLLILAFVGAAVA. The 221-residue stretch at 24-244 folds into the Peptidase S1 domain; that stretch reads IVGGYTCEEN…YVDWIKDTIA (221 aa). Cys-48 and Cys-64 are disulfide-bonded. His-63 (charge relay system) is an active-site residue. Glu-75, Asn-77, Val-80, and Glu-85 together coordinate Ca(2+). Asp-107 functions as the Charge relay system in the catalytic mechanism. 3 disulfides stabilise this stretch: Cys-139–Cys-206, Cys-171–Cys-185, and Cys-196–Cys-220. Ser-200 functions as the Charge relay system in the catalytic mechanism.

This sequence belongs to the peptidase S1 family. Tryptase subfamily. As to expression, overexpressed in metastasing in non small cell lung tumors, leading to an enhanced cell migration.

Its subcellular location is the secreted. The enzyme catalyses Preferential cleavage: Arg-|-Xaa, Lys-|-Xaa.. Its function is as follows. May regulate cell migration. The protein is Putative trypsin-6 (PRSS3P2) of Homo sapiens (Human).